A 292-amino-acid chain; its full sequence is Large ribosomal subunit protein bL19m (292 aa).

The disordered stretch occupies residues 41 to 60 (SRFQSTGPSEPGGFKPPPKP). S77 is subject to Phosphoserine.

Belongs to the bacterial ribosomal protein bL19 family. As to quaternary structure, component of the mitochondrial ribosome large subunit (39S) which comprises a 16S rRNA and about 50 distinct proteins.

Its subcellular location is the mitochondrion. This Mus musculus (Mouse) protein is Large ribosomal subunit protein bL19m (Mrpl19).